The primary structure comprises 524 residues: Cytochrome P450 monooxygenase oblB (524 aa).

Transmembrane regions (helical) follow at residues 18–38 (ILNA…GLVI), 225–245 (FHSG…IHLI), and 322–342 (VLIG…VYYI). Residue Cys-466 participates in heme binding.

This sequence belongs to the cytochrome P450 family. It depends on heme as a cofactor.

The protein resides in the membrane. The enzyme catalyses ophiobolin F + 4 reduced [NADPH--hemoprotein reductase] + 4 O2 = ophiobolin C + 4 oxidized [NADPH--hemoprotein reductase] + 6 H2O + 4 H(+). The protein operates within secondary metabolite biosynthesis; terpenoid biosynthesis. Cytochrome P450 monooxygenase; part of the gene cluster that mediates the biosynthesis of the sesterterpenes ophiobolins, fungal phytotoxins with potential anti-cancer activities. The first step of the pathway is performed by the sesterterpene synthase oblA that possesses both prenyl transferase and terpene cyclase activity, converting isopentenyl diphosphate and dimethylallyl diphosphate into geranylfarnesyl diphosphate (GFPP) and further converting GFPP into ophiobolin F, respectively. Other sesterterpenoids (C(25) terpenoids) are found as minor products of oblA. The cytochrome P450 monooxygenase oblB then catalyzes a four-step oxidative transformation of ophiobolin F to yield ophiobolin C. The FAD-dependent oxidoreductase oblC might be involved in a later oxidation step that produces ophiobolin A. The protein is Cytochrome P450 monooxygenase oblB of Cochliobolus heterostrophus (strain C5 / ATCC 48332 / race O) (Southern corn leaf blight fungus).